The sequence spans 491 residues: 23S rRNA (uracil(1939)-C(5))-methyltransferase RlmD (491 aa).

The span at 1–10 (MSDPTEHPEI) shows a compositional bias: basic and acidic residues. The disordered stretch occupies residues 1–28 (MSDPTEHPEILQDPSSSAPVQGRTDLPP). A TRAM domain is found at 18 to 81 (APVQGRTDLP…NNWEQASLTA (64 aa)). [4Fe-4S] cluster contacts are provided by Cys94, Cys104, Cys107, and Cys186. Gln294, Phe323, Asn328, Glu344, Asn379, and Asp400 together coordinate S-adenosyl-L-methionine. Cys447 functions as the Nucleophile in the catalytic mechanism.

The protein belongs to the class I-like SAM-binding methyltransferase superfamily. RNA M5U methyltransferase family. RlmD subfamily.

The catalysed reaction is uridine(1939) in 23S rRNA + S-adenosyl-L-methionine = 5-methyluridine(1939) in 23S rRNA + S-adenosyl-L-homocysteine + H(+). Catalyzes the formation of 5-methyl-uridine at position 1939 (m5U1939) in 23S rRNA. In Paracidovorax citrulli (strain AAC00-1) (Acidovorax citrulli), this protein is 23S rRNA (uracil(1939)-C(5))-methyltransferase RlmD.